The chain runs to 343 residues: Homeobox protein Hox-D13 (343 aa).

Disordered regions lie at residues 1–28 and 78–115; these read MSRA…SSSS and GTSE…PAAA. Residues 85–115 show a composition bias toward low complexity; it reads SSSSSSSSAVVAARPEAPPAKECPAPTPAAA. The segment at residues 276 to 335 is a DNA-binding region (homeobox); the sequence is GRKKRVPYTKLQLKELENEYAINKFINKDKRRRISAATNLSERQVTIWFQNRRVKDKKIV.

Belongs to the Abd-B homeobox family.

The protein resides in the nucleus. Its function is as follows. Sequence-specific transcription factor that binds gene promoters and activates their transcription. Part of a developmental regulatory system that provides cells with specific positional identities on the anterior-posterior axis. The protein is Homeobox protein Hox-D13 (HOXD13) of Homo sapiens (Human).